Here is a 343-residue protein sequence, read N- to C-terminus: MNIHRSTPITIARYGRSRNKTQDFEELSSIRSAEPSQSFSPNLGSPSPPETPNLSHCVSCIGKYLLLEPLEGDHVFRAVHLHSGEELVCKVFEISCYQESLAPCFCLSAHSNINQITEILLGETKAYVFFERSYGDMHSFVRTCKKLREEEAARLFYQIASAVAHCHDGGLVLRDLKLRKFIFKDEERTRVKLESLEDAYILRGDDDSLSDKHGCPAYVSPEILNTSGSYSGKAADVWSLGVMLYTMLVGRYPFHDIEPSSLFSKIRRGQFNIPETLSPKAKCLIRSILRREPSERLTSQEILDHPWFSTDFSVSNSGFGAKEACDQLVPDVNMEENLDPFFN.

Residues 25–50 (EELSSIRSAEPSQSFSPNLGSPSPPE) are disordered. The span at 29-45 (SIRSAEPSQSFSPNLGS) shows a compositional bias: polar residues. Positions 61 to 308 (IGKYLLLEPL…SQEILDHPWF (248 aa)) constitute a Protein kinase domain.

Belongs to the protein kinase superfamily. CAMK Ser/Thr protein kinase family. Tribbles subfamily.

It is found in the cytoplasm. Its subcellular location is the cytoskeleton. Functionally, interacts with MAPK kinases and regulates activation of MAP kinases. Does not display kinase activity. The protein is Tribbles homolog 2 of Mus musculus (Mouse).